The sequence spans 145 residues: Granulysin (145 aa).

The first 22 residues, 1 to 22 (MATWALLLLAAMLLGNPGLVFS), serve as a signal peptide directing secretion. One can recognise a Saposin B-type domain in the interval 62 to 142 (LGRDYRTCLT…EDLRLCIPST (81 aa)). 2 cysteine pairs are disulfide-bonded: Cys69/Cys132 and Cys96/Cys107.

Post-translationally, a 9 kDa form is produced by proteolytic processing of a 15 kDa protein. Expressed in natural killer and T-cells.

It localises to the secreted. In terms of biological role, antimicrobial protein that kills intracellular pathogens. Active against a broad range of microbes, including Gram-positive and Gram-negative bacteria, fungi, and parasites. Kills Mycobacterium tuberculosis. The chain is Granulysin (GNLY) from Homo sapiens (Human).